Consider the following 111-residue polypeptide: Probable 4-amino-4-deoxy-L-arabinose-phosphoundecaprenol flippase subunit ArnE (111 aa).

A run of 3 helical transmembrane segments spans residues 38–58 (LWLG…LLVL), 61–81 (LPVG…TLAA), and 91–111 (PRHW…GSAA). An EamA domain is found at 40 to 109 (LGLALICMGA…IISGIIILGS (70 aa)).

The protein belongs to the ArnE family. As to quaternary structure, heterodimer of ArnE and ArnF.

The protein localises to the cell inner membrane. It functions in the pathway bacterial outer membrane biogenesis; lipopolysaccharide biosynthesis. Translocates 4-amino-4-deoxy-L-arabinose-phosphoundecaprenol (alpha-L-Ara4N-phosphoundecaprenol) from the cytoplasmic to the periplasmic side of the inner membrane. In Salmonella newport (strain SL254), this protein is Probable 4-amino-4-deoxy-L-arabinose-phosphoundecaprenol flippase subunit ArnE.